The sequence spans 124 residues: Anamorsin homolog (124 aa).

Over residues 1 to 20 (MSSPAPSTSHNAANSTQAFS) the composition is skewed to polar residues. Disordered regions lie at residues 1 to 39 (MSSPAPSTSHNAANSTQAFSLKTRRPIDEDDLLTAEDRE) and 40 to 124 (AKST…TDDI). Positions 49, 56, 59, and 61 each coordinate [2Fe-2S] cluster. A fe-S binding site A region spans residues 49-61 (CATRRRACKNCTC). Cys86, Cys89, Cys97, and Cys100 together coordinate [4Fe-4S] cluster. Short sequence motifs (cx2C motif) lie at residues 86 to 89 (CGNC) and 97 to 100 (CAGC). Positions 86–100 (CGNCAKGDAFRCAGC) are fe-S binding site B.

Belongs to the anamorsin family. Monomer. [2Fe-2S] cluster is required as a cofactor. Requires [4Fe-4S] cluster as cofactor.

The protein localises to the cytoplasm. It localises to the mitochondrion intermembrane space. Component of the cytosolic iron-sulfur (Fe-S) protein assembly (CIA) machinery. Required for the maturation of extramitochondrial Fe-S proteins. Part of an electron transfer chain functioning in an early step of cytosolic Fe-S biogenesis, facilitating the de novo assembly of a [4Fe-4S] cluster on the cytosolic Fe-S scaffold complex. Electrons are transferred from NADPH via a FAD- and FMN-containing diflavin oxidoreductase. Together with the diflavin oxidoreductase, also required for the assembly of the diferric tyrosyl radical cofactor of ribonucleotide reductase (RNR), probably by providing electrons for reduction during radical cofactor maturation in the catalytic small subunit. This Trypanosoma brucei brucei (strain 927/4 GUTat10.1) protein is Anamorsin homolog.